A 227-amino-acid chain; its full sequence is Glutathione S-transferase U18 (227 aa).

The GST N-terminal domain occupies 4-83; that stretch reads EDVKLIGSWA…YIDEAWNSSG (80 aa). Residues 14-15, 40-41, 54-55, and 67-68 contribute to the glutathione site; these read SV, SK, KM, and ES. One can recognise a GST C-terminal domain in the interval 90 to 221; that stretch reads HPYDRAIARF…TKLAEFARKL (132 aa).

Belongs to the GST superfamily. Tau family.

It localises to the cytoplasm. It is found in the cytosol. The enzyme catalyses RX + glutathione = an S-substituted glutathione + a halide anion + H(+). In terms of biological role, may be involved in the conjugation of reduced glutathione to a wide number of exogenous and endogenous hydrophobic electrophiles and have a detoxification role against certain herbicides. In Arabidopsis thaliana (Mouse-ear cress), this protein is Glutathione S-transferase U18 (GSTU18).